Here is a 615-residue protein sequence, read N- to C-terminus: Zinc finger protein 653 (615 aa).

4 disordered regions span residues 1–48 (MAER…ARRR), 95–117 (RSGR…KRRR), 176–236 (PLSD…SSGL), and 401–432 (EEKE…ELDG). Positions 107–118 (PKKPKRKKRRRR) match the Nuclear localization signal motif. Basic residues predominate over residues 108 to 117 (KKPKRKKRRR). Positions 193-205 (AGSSDSSSSGSAS) are enriched in low complexity. Polar residues predominate over residues 226 to 236 (TPTSPVGSSGL). Residues 419–432 (AEPEAEADGEELDG) are compositionally biased toward acidic residues. The Nuclear localization signal motif lies at 445-451 (EPEKRRR). 5 consecutive C2H2-type zinc fingers follow at residues 467-492 (FHCP…NLVH), 498-522 (KVCP…MIIH), 528-550 (FTCE…RRTH), 556-578 (LQCE…MKKH), and 586-609 (FTCD…LKSH).

The protein belongs to the krueppel C2H2-type zinc-finger protein family. As to quaternary structure, interacts with NR5A1. Highly expressed in testis, cerebellum, temporal lobe, hippocampus and the adrenal gland. Moderately expressed in spleen, uterus, thymus, pancreas, kidney, stomach and rectum.

It localises to the nucleus. Functionally, transcriptional repressor. May repress NR5A1, PPARG, NR1H3, NR4A2, ESR1 and NR3C1 transcriptional activity. This chain is Zinc finger protein 653 (ZNF653), found in Homo sapiens (Human).